The primary structure comprises 116 residues: Integration host factor subunit alpha (116 aa).

Disordered stretches follow at residues 58–80 (FGNF…GETI) and 94–116 (QKLK…EAAE). A compositionally biased stretch (polar residues) spans 94-105 (QKLKSTVEQSGN).

This sequence belongs to the bacterial histone-like protein family. As to quaternary structure, heterodimer of an alpha and a beta chain.

This protein is one of the two subunits of integration host factor, a specific DNA-binding protein that functions in genetic recombination as well as in transcriptional and translational control. This chain is Integration host factor subunit alpha, found in Bordetella avium (strain 197N).